Reading from the N-terminus, the 303-residue chain is UDP-3-O-acyl-N-acetylglucosamine deacetylase (303 aa).

Zn(2+) contacts are provided by His-78, His-237, and Asp-241. Catalysis depends on His-264, which acts as the Proton donor.

The protein belongs to the LpxC family. Zn(2+) is required as a cofactor.

It catalyses the reaction a UDP-3-O-[(3R)-3-hydroxyacyl]-N-acetyl-alpha-D-glucosamine + H2O = a UDP-3-O-[(3R)-3-hydroxyacyl]-alpha-D-glucosamine + acetate. It functions in the pathway glycolipid biosynthesis; lipid IV(A) biosynthesis; lipid IV(A) from (3R)-3-hydroxytetradecanoyl-[acyl-carrier-protein] and UDP-N-acetyl-alpha-D-glucosamine: step 2/6. Catalyzes the hydrolysis of UDP-3-O-myristoyl-N-acetylglucosamine to form UDP-3-O-myristoylglucosamine and acetate, the committed step in lipid A biosynthesis. This is UDP-3-O-acyl-N-acetylglucosamine deacetylase from Saccharophagus degradans (strain 2-40 / ATCC 43961 / DSM 17024).